Reading from the N-terminus, the 852-residue chain is DNA double-strand break repair Rad50 ATPase (852 aa).

ATP contacts are provided by N32, G33, A34, G35, K36, S37, S38, R53, Y54, D59, V61, and R63. Residue S37 participates in Mg(2+) binding. Q142 contributes to the Mg(2+) binding site. 2 coiled-coil regions span residues E155 to D345 and L389 to S427. Positions L389 to L488 constitute a Zinc-hook domain. Zn(2+) is bound by residues C435 and C438. 2 coiled-coil regions span residues D460–L488 and K534–K711. D797 provides a ligand contact to Mg(2+).

The protein belongs to the SMC family. RAD50 subfamily. As to quaternary structure, homodimer. Forms a complex with Mre11. Zn(2+) serves as cofactor.

The catalysed reaction is ATP + H2O = ADP + phosphate + H(+). Functionally, involved in DNA double-strand break repair (DSBR). The Rad50/Mre11 complex possesses single-strand endonuclease activity and ATP-dependent double-strand-specific 3'-5' exonuclease activity. Rad50 provides an ATP-dependent control of Mre11 by positioning DNA ends into the Mre11 active site: ATP-binding induces a large structural change from an open form with accessible Mre11 nuclease sites into a closed form. The chain is DNA double-strand break repair Rad50 ATPase from Thermotoga maritima (strain ATCC 43589 / DSM 3109 / JCM 10099 / NBRC 100826 / MSB8).